The sequence spans 302 residues: Pseudouridine-5'-phosphate glycosidase (302 aa).

Glu-25 (proton donor) is an active-site residue. Substrate-binding residues include Lys-86 and Val-106. Asp-138 is a Mn(2+) binding site. Position 140–142 (140–142) interacts with substrate; the sequence is SAD. The active-site Nucleophile is Lys-159.

Belongs to the pseudouridine-5'-phosphate glycosidase family. In terms of assembly, homotrimer. It depends on Mn(2+) as a cofactor.

The enzyme catalyses D-ribose 5-phosphate + uracil = psi-UMP + H2O. In terms of biological role, catalyzes the reversible cleavage of pseudouridine 5'-phosphate (PsiMP) to ribose 5-phosphate and uracil. Functions biologically in the cleavage direction, as part of a pseudouridine degradation pathway. This Jannaschia sp. (strain CCS1) protein is Pseudouridine-5'-phosphate glycosidase.